We begin with the raw amino-acid sequence, 210 residues long: 7-carboxy-7-deazaguanine synthase (210 aa).

Residues 12–14 and arginine 27 contribute to the substrate site; that span reads LQG. Residues 18 to 210 form the Radical SAM core domain; the sequence is NAGRPAVFCR…MQTHKYLNIP (193 aa). Residues cysteine 31, cysteine 46, and cysteine 49 each contribute to the [4Fe-4S] cluster site. S-adenosyl-L-methionine is bound at residue 48 to 50; the sequence is FCD. Threonine 51 is a Mg(2+) binding site. Threonine 90 is a binding site for substrate. S-adenosyl-L-methionine is bound by residues glycine 92, 133–135, and 173–176; these read SPK and QPMD. Proline 210 provides a ligand contact to substrate.

It belongs to the radical SAM superfamily. 7-carboxy-7-deazaguanine synthase family. As to quaternary structure, homodimer. [4Fe-4S] cluster is required as a cofactor. Requires S-adenosyl-L-methionine as cofactor. It depends on Mg(2+) as a cofactor.

The catalysed reaction is 6-carboxy-5,6,7,8-tetrahydropterin + H(+) = 7-carboxy-7-deazaguanine + NH4(+). Its pathway is purine metabolism; 7-cyano-7-deazaguanine biosynthesis. Catalyzes the complex heterocyclic radical-mediated conversion of 6-carboxy-5,6,7,8-tetrahydropterin (CPH4) to 7-carboxy-7-deazaguanine (CDG), a step common to the biosynthetic pathways of all 7-deazapurine-containing compounds. The protein is 7-carboxy-7-deazaguanine synthase of Burkholderia multivorans (strain ATCC 17616 / 249).